A 553-amino-acid chain; its full sequence is Solute carrier family 45 member 3 (553 aa).

Transmembrane regions (helical) follow at residues 19-39, 52-72, 88-108, 120-140, 161-181, 198-218, 275-295, 323-343, 353-373, 382-402, and 522-542; these read LLINLLTFGLEVCLAAGITYV, FMTMVLGIGPVLGLVSVPLLG, FIWALSLGILLSLFLIPRAGW, LELALLILGVGLLDFCGQVCF, YSVYAFMISLGGCLGYLLPAI, CLFGLLTLIFLTCVAATLLVA, FVAELCSWMALMTFTLFYTDF, MGSLGLFLQCAISLVFSLVMD, AVYLASVAAFPVAAGATCLSH, AALTGFTFSALQILPYTLASL, and AYMVSAAGLGLVAIYFATQVV.

The protein belongs to the glycoside-pentoside-hexuronide (GPH) cation symporter transporter (TC 2.A.2) family.

It is found in the membrane. The enzyme catalyses sucrose(out) + H(+)(out) = sucrose(in) + H(+)(in). Proton-associated sucrose transporter. May be able to transport also glucose and fructose. The polypeptide is Solute carrier family 45 member 3 (SLC45A3) (Macaca fascicularis (Crab-eating macaque)).